We begin with the raw amino-acid sequence, 614 residues long: Vitamin B12 transporter BtuB (614 aa).

A signal peptide spans 1–20 (MIKKASLLTACSVTAFSAWA). A TonB box motif is present at residues 26–33 (DTLVVTAN). Residues 38-152 (PRSTVLAPTT…IGGVVNIITT (115 aa)) enclose the TBDR plug domain. Residues L83, S85, N92, and 110-111 (VS) contribute to the cyanocob(III)alamin site. The TBDR beta-barrel domain occupies 155–614 (EPGTEISAGW…EYTLSGSYTF (460 aa)). 3 consecutive transmembrane segments (beta stranded) span residues 158 to 165 (TEISAGWG), 169 to 178 (YQNYDVSTQQ), and 184 to 195 (TRVTLLGDYAHT). Ca(2+) is bound by residues D199, Q211, D213, and D215. 2 beta stranded membrane passes run 217-227 (FLSKTLYGALE) and 232-248 (DAWSGFVRGYGYDNRTN). Ca(2+) contacts are provided by Y249 and D250. Cyanocob(III)alamin is bound at residue A251. D261 provides a ligand contact to Ca(2+). Beta stranded transmembrane passes span 263–277 (RKLYSQSWDAGLRYN), 279–296 (ELIKSQLITSYSHSKDYN), 309–325 (TLDEMKQYTVQWANNVI), 328–337 (HGSIGAGVDW), 353–369 (YDQRNTGIYLTGLQQVG), 371–381 (FTFEGAARNDD), 385–400 (FGRHGTWQTSAGWEFI), 403–417 (YRFIASYGTSYKAPN), 434–443 (KSKQWEGAFE), 449–458 (VNWRISGYRN), 473–490 (YYNEGKARIKGVEATANF), 494–509 (PLTHTVSYDYVDARNA), 517–529 (RRAKQQVKYQLDW), and 535–550 (DWGITYQYLGTRYDKD). Position 309 (T309) interacts with cyanocob(III)alamin. R517 lines the cyanocob(III)alamin pocket. Y551 serves as a coordination point for cyanocob(III)alamin. Transmembrane regions (beta stranded) follow at residues 558 to 572 (TVKMGGVSLWDLAVA), 585 to 596 (IANLFDKDYETV), and 602 to 614 (AGREYTLSGSYTF). The short motif at 597–614 (YGYQTAGREYTLSGSYTF) is the TonB C-terminal box element.

It belongs to the TonB-dependent receptor family. BtuB (TC 1.B.14.3.1) subfamily.

The protein resides in the cell outer membrane. Its function is as follows. Involved in the active translocation of vitamin B12 (cyanocobalamin) across the outer membrane to the periplasmic space. It derives its energy for transport by interacting with the trans-periplasmic membrane protein TonB. This Escherichia coli O139:H28 (strain E24377A / ETEC) protein is Vitamin B12 transporter BtuB.